The primary structure comprises 181 residues: uncharacterized protein (181 aa).

The disordered stretch occupies residues 151–181; that stretch reads AQKKKDFQEPENKHEQLTSTKAPCQENWSDF. The segment covering 154–166 has biased composition (basic and acidic residues); sequence KKDFQEPENKHEQ. The span at 167–181 shows a compositional bias: polar residues; it reads LTSTKAPCQENWSDF.

This is an uncharacterized protein from Caenorhabditis elegans.